The primary structure comprises 156 residues: Small ribosomal subunit protein uS7 (156 aa).

It belongs to the universal ribosomal protein uS7 family. As to quaternary structure, part of the 30S ribosomal subunit. Contacts proteins S9 and S11.

One of the primary rRNA binding proteins, it binds directly to 16S rRNA where it nucleates assembly of the head domain of the 30S subunit. Is located at the subunit interface close to the decoding center, probably blocks exit of the E-site tRNA. This chain is Small ribosomal subunit protein uS7, found in Cellvibrio japonicus (strain Ueda107) (Pseudomonas fluorescens subsp. cellulosa).